The primary structure comprises 317 residues: Aspartate carbamoyltransferase catalytic subunit (317 aa).

Carbamoyl phosphate is bound by residues Arg-55 and Thr-56. Lys-83 serves as a coordination point for L-aspartate. 3 residues coordinate carbamoyl phosphate: Arg-105, His-138, and Gln-141. Arg-171 and Arg-225 together coordinate L-aspartate. Gly-266 and Pro-267 together coordinate carbamoyl phosphate.

It belongs to the aspartate/ornithine carbamoyltransferase superfamily. ATCase family. Heterododecamer (2C3:3R2) of six catalytic PyrB chains organized as two trimers (C3), and six regulatory PyrI chains organized as three dimers (R2).

The enzyme catalyses carbamoyl phosphate + L-aspartate = N-carbamoyl-L-aspartate + phosphate + H(+). It functions in the pathway pyrimidine metabolism; UMP biosynthesis via de novo pathway; (S)-dihydroorotate from bicarbonate: step 2/3. Catalyzes the condensation of carbamoyl phosphate and aspartate to form carbamoyl aspartate and inorganic phosphate, the committed step in the de novo pyrimidine nucleotide biosynthesis pathway. This chain is Aspartate carbamoyltransferase catalytic subunit, found in Mycobacteroides abscessus (strain ATCC 19977 / DSM 44196 / CCUG 20993 / CIP 104536 / JCM 13569 / NCTC 13031 / TMC 1543 / L948) (Mycobacterium abscessus).